A 211-amino-acid polypeptide reads, in one-letter code: Methylthioribulose-1-phosphate dehydratase (211 aa).

His-101 and His-103 together coordinate Zn(2+).

The protein belongs to the aldolase class II family. MtnB subfamily. It depends on Zn(2+) as a cofactor.

It catalyses the reaction 5-(methylsulfanyl)-D-ribulose 1-phosphate = 5-methylsulfanyl-2,3-dioxopentyl phosphate + H2O. Its pathway is amino-acid biosynthesis; L-methionine biosynthesis via salvage pathway; L-methionine from S-methyl-5-thio-alpha-D-ribose 1-phosphate: step 2/6. Its function is as follows. Catalyzes the dehydration of methylthioribulose-1-phosphate (MTRu-1-P) into 2,3-diketo-5-methylthiopentyl-1-phosphate (DK-MTP-1-P). In Alcanivorax borkumensis (strain ATCC 700651 / DSM 11573 / NCIMB 13689 / SK2), this protein is Methylthioribulose-1-phosphate dehydratase.